Consider the following 375-residue polypeptide: 23S rRNA (uracil(747)-C(5))-methyltransferase RlmC (375 aa).

4 residues coordinate [4Fe-4S] cluster: Cys3, Cys11, Cys14, and Cys87. Residues Gln212, Phe241, Glu262, and Asn307 each contribute to the S-adenosyl-L-methionine site. Residue Cys334 is the Nucleophile of the active site.

The protein belongs to the class I-like SAM-binding methyltransferase superfamily. RNA M5U methyltransferase family. RlmC subfamily.

It carries out the reaction uridine(747) in 23S rRNA + S-adenosyl-L-methionine = 5-methyluridine(747) in 23S rRNA + S-adenosyl-L-homocysteine + H(+). In terms of biological role, catalyzes the formation of 5-methyl-uridine at position 747 (m5U747) in 23S rRNA. This chain is 23S rRNA (uracil(747)-C(5))-methyltransferase RlmC, found in Cronobacter sakazakii (strain ATCC BAA-894) (Enterobacter sakazakii).